A 261-amino-acid chain; its full sequence is Thiamine thiazole synthase (261 aa).

NAD(+)-binding positions include Ser40, 59–60, Gly67, Val133, and 159–161; these read ER and HVD. Fe cation contacts are provided by Asp161 and His176. The NAD(+) site is built by Ser179 and Met226. Arg236 provides a ligand contact to glycine.

It belongs to the THI4 family. Homooctamer; tetramer of dimers. Fe(2+) is required as a cofactor.

The enzyme catalyses hydrogen sulfide + glycine + NAD(+) = ADP-5-ethyl-4-methylthiazole-2-carboxylate + nicotinamide + 3 H2O + H(+). It participates in cofactor biosynthesis; thiamine diphosphate biosynthesis. Functionally, involved in the biosynthesis of the thiazole moiety of thiamine. Catalyzes the conversion of NAD and glycine to adenosine diphosphate 5-(2-hydroxyethyl)-4-methylthiazole-2-carboxylate (ADT), an adenylated thiazole intermediate, using free sulfide as a source of sulfur. The protein is Thiamine thiazole synthase of Methanococcus vannielii (strain ATCC 35089 / DSM 1224 / JCM 13029 / OCM 148 / SB).